We begin with the raw amino-acid sequence, 119 residues long: Large ribosomal subunit protein bL19 (119 aa).

This sequence belongs to the bacterial ribosomal protein bL19 family.

In terms of biological role, this protein is located at the 30S-50S ribosomal subunit interface and may play a role in the structure and function of the aminoacyl-tRNA binding site. The sequence is that of Large ribosomal subunit protein bL19 from Pseudoalteromonas translucida (strain TAC 125).